The sequence spans 1235 residues: STE20-like serine/threonine-protein kinase (1235 aa).

At Ser-14 the chain carries Phosphoserine. A Protein kinase domain is found at Trp-34 to Val-292. ATP-binding positions include Leu-40–Val-48 and Lys-63. The active-site Proton acceptor is Asp-155. Position 183 is a phosphothreonine (Thr-183). A Phosphoserine modification is found at Ser-189. The segment at Ala-309 to Asp-351 is disordered. Residues Thr-312–Glu-328 show a composition bias toward acidic residues. Ser-330, Ser-340, Ser-341, Ser-344, Ser-347, Ser-348, Ser-354, and Ser-372 each carry phosphoserine. 2 disordered regions span residues Val-363–Ala-393 and Glu-421–Thr-441. The segment covering Glu-421–Asn-432 has biased composition (basic and acidic residues). Ser-518 bears the Phosphoserine mark. The segment at Glu-519–Lys-539 is disordered. Residues Leu-522 to Lys-539 are compositionally biased toward basic and acidic residues. Ser-565 carries the post-translational modification Phosphoserine. Thr-569 is subject to Phosphothreonine. Phosphoserine is present on residues Ser-571, Ser-647, Ser-655, and Ser-667. The tract at residues Glu-613 to Ser-760 is disordered. Residues Glu-638–Glu-650 show a composition bias toward acidic residues. Positions Ile-679 to Glu-695 are enriched in basic and acidic residues. Positions Asp-749 to Ser-760 are enriched in low complexity. Residues Ser-777 and Ser-779 each carry the phosphoserine modification. Thr-814 carries the post-translational modification Phosphothreonine. Ser-818 carries the phosphoserine modification. A coiled-coil region spans residues Leu-826–Ala-1069. The 36-residue stretch at Asp-875 to Glu-910 folds into the UVR domain. Residue Thr-1097 is modified to Phosphothreonine. A coiled-coil region spans residues Ala-1109 to Arg-1183.

This sequence belongs to the protein kinase superfamily. STE Ser/Thr protein kinase family. STE20 subfamily. In terms of processing, proteolytically cleaved by caspase-3. Post-translationally, autophosphorylated. In terms of tissue distribution, ubiquitously expressed. Highest expression is found in heart and in skeletal muscle.

The protein localises to the cytoplasm. The catalysed reaction is L-seryl-[protein] + ATP = O-phospho-L-seryl-[protein] + ADP + H(+). The enzyme catalyses L-threonyl-[protein] + ATP = O-phospho-L-threonyl-[protein] + ADP + H(+). Mediates apoptosis and actin stress fiber dissolution. This chain is STE20-like serine/threonine-protein kinase (SLK), found in Homo sapiens (Human).